We begin with the raw amino-acid sequence, 296 residues long: Indole-3-glycerol phosphate synthase (296 aa).

This sequence belongs to the TrpC family.

The enzyme catalyses 1-(2-carboxyphenylamino)-1-deoxy-D-ribulose 5-phosphate + H(+) = (1S,2R)-1-C-(indol-3-yl)glycerol 3-phosphate + CO2 + H2O. It participates in amino-acid biosynthesis; L-tryptophan biosynthesis; L-tryptophan from chorismate: step 4/5. This chain is Indole-3-glycerol phosphate synthase, found in Microcystis aeruginosa (strain NIES-843 / IAM M-2473).